The primary structure comprises 70 residues: Large ribosomal subunit protein bL31 (70 aa).

The Zn(2+) site is built by C16, C18, C38, and C41.

This sequence belongs to the bacterial ribosomal protein bL31 family. Type A subfamily. As to quaternary structure, part of the 50S ribosomal subunit. Zn(2+) serves as cofactor.

Its function is as follows. Binds the 23S rRNA. The polypeptide is Large ribosomal subunit protein bL31 (Bifidobacterium adolescentis (strain ATCC 15703 / DSM 20083 / NCTC 11814 / E194a)).